Reading from the N-terminus, the 213-residue chain is Glutamine amidotransferase-like class 1 domain-containing protein 1 (213 aa).

The first 20 residues, 1-20 (MTSKPTCLIVASAASAGVSA), serve as a signal peptide directing secretion.

It belongs to the peptidase C56 family. As to quaternary structure, homotetramer. Component of the FERRY complex.

The protein resides in the secreted. It is found in the early endosome. Functionally, component of the FERRY complex (Five-subunit Endosomal Rab5 and RNA/ribosome intermediary). The FERRY complex directly interacts with mRNAs and RAB5A, and functions as a RAB5A effector involved in the localization and the distribution of specific mRNAs most likely by mediating their endosomal transport. The complex recruits mRNAs and ribosomes to early endosomes through direct mRNA-interaction. The chain is Glutamine amidotransferase-like class 1 domain-containing protein 1 from Danio rerio (Zebrafish).